We begin with the raw amino-acid sequence, 56 residues long: Large ribosomal subunit protein bL32 (56 aa).

The segment at 1-56 is disordered; it reads MAVQQNRKTRSKRGMRRSHDALSAPTLSQDKETGTTHRRHHVAPDGFYRGRKVVDV. Over residues 7 to 16 the composition is skewed to basic residues; the sequence is RKTRSKRGMR.

Belongs to the bacterial ribosomal protein bL32 family.

The sequence is that of Large ribosomal subunit protein bL32 from Chromohalobacter salexigens (strain ATCC BAA-138 / DSM 3043 / CIP 106854 / NCIMB 13768 / 1H11).